Reading from the N-terminus, the 342-residue chain is MTHLTLTRPDDWHIHLRDGDSLADTVRDAGRYMGRAIVMPNLVPPVTTTEAAIAYYERIKAHSSTAFEPLMVLYLTDKTSPDEIRAAKASGKVVAAKLYPAGATTNSDSGVTDVNNIYGVLKAMEEEGLLLLVHGEVTDSAIDIFDRERIFIENILSKVVADFPGLKIVLEHITTKDAVDFVMSAGDNVAATITAHHLLYNRNHMLAGGIRPHFYCLPILKRNTHQQALLAAATSGSKKFFLGTDSAPHAKDKKEAACGCAGSYTAHAALELYAEAFEAEGALDKLEAFASFNGPDFYGLPRNADTVALVKSPWQVPESYPLGSTTVVPIRAGEIIGWKVED.

His-13 and His-15 together coordinate Zn(2+). Substrate is bound by residues 15–17 (HLR) and Asn-41. Residues Lys-97, His-134, and His-172 each contribute to the Zn(2+) site. Lys-97 is modified (N6-carboxylysine). A substrate-binding site is contributed by His-134. Leu-217 contacts substrate. A Zn(2+)-binding site is contributed by Asp-245. Asp-245 is a catalytic residue. Substrate-binding residues include His-249 and Ala-261.

Belongs to the metallo-dependent hydrolases superfamily. DHOase family. Class II DHOase subfamily. Homodimer. Zn(2+) serves as cofactor.

The enzyme catalyses (S)-dihydroorotate + H2O = N-carbamoyl-L-aspartate + H(+). It functions in the pathway pyrimidine metabolism; UMP biosynthesis via de novo pathway; (S)-dihydroorotate from bicarbonate: step 3/3. Catalyzes the reversible cyclization of carbamoyl aspartate to dihydroorotate. The protein is Dihydroorotase of Shewanella amazonensis (strain ATCC BAA-1098 / SB2B).